Reading from the N-terminus, the 327-residue chain is Eukaryotic translation initiation factor 3 subunit I (327 aa).

WD repeat units lie at residues 8–49 (GHER…GSYD), 51–89 (HNGA…CLYT), 188–227 (VHRY…KLKQ), 229–268 (KSER…GHFE), and 285–324 (GHFG…LGFT).

This sequence belongs to the eIF-3 subunit I family. Component of the eukaryotic translation initiation factor 3 (eIF-3) complex.

It localises to the cytoplasm. Its function is as follows. Component of the eukaryotic translation initiation factor 3 (eIF-3) complex, which is involved in protein synthesis of a specialized repertoire of mRNAs and, together with other initiation factors, stimulates binding of mRNA and methionyl-tRNAi to the 40S ribosome. The eIF-3 complex specifically targets and initiates translation of a subset of mRNAs involved in cell proliferation. The chain is Eukaryotic translation initiation factor 3 subunit I from Caenorhabditis elegans.